Consider the following 357-residue polypeptide: Protein RecA (357 aa).

Residue 67–74 coordinates ATP; sequence GPESSGKT. Residues 333–357 are disordered; that stretch reads NELTPATAGNSHDEDAFADEGNEEF. Acidic residues predominate over residues 348–357; that stretch reads AFADEGNEEF.

It belongs to the RecA family.

The protein localises to the cytoplasm. Can catalyze the hydrolysis of ATP in the presence of single-stranded DNA, the ATP-dependent uptake of single-stranded DNA by duplex DNA, and the ATP-dependent hybridization of homologous single-stranded DNAs. It interacts with LexA causing its activation and leading to its autocatalytic cleavage. The sequence is that of Protein RecA from Pectobacterium carotovorum subsp. carotovorum (strain PC1).